We begin with the raw amino-acid sequence, 500 residues long: Allene oxide synthase 3 (500 aa).

Residues 1-26 form a disordered region; it reads MAPPPVNSGDAAAAATGEKSKLSPSG. Residues 297 to 298, Lys304, and 365 to 368 each bind substrate; these read FN and PVEF. Position 452 (Cys452) interacts with heme.

Belongs to the cytochrome P450 family. Requires heme as cofactor. Not expressed in dark-grown seedlings.

The catalysed reaction is (13S)-hydroperoxy-(9Z,11E,15Z)-octadecatrienoate = (9Z,13S,15Z)-12,13-epoxyoctadeca-9,11,15-trienoate + H2O. It functions in the pathway lipid metabolism; oxylipin biosynthesis. Functionally, involved in the biosynthesis of jasmonic acid, a growth regulator that is implicated also as a signaling molecule in plant defense. Converts 13-hydroperoxylinolenic acid to 12,13-epoxylinolenic acid. This chain is Allene oxide synthase 3 (CYP74A3), found in Oryza sativa subsp. japonica (Rice).